Here is a 993-residue protein sequence, read N- to C-terminus: P3N-PIPO polyprotein (993 aa).

A Peptidase S30 domain is found at 154–298 (GVTPYSVQQL…ESTMLSTHHY (145 aa)). Active-site for P1 proteinase activity residues include His207, Asp216, and Ser249. Positions 349–352 (KITC) match the Involved in interaction with stylet and aphid transmission motif. Positions 607 to 609 (PTK) match the Involved in virions binding and aphid transmission motif. Residues 633-755 (MYIAKSGYCY…DSEMKHYRVG (123 aa)) form the Peptidase C6 domain. Active-site for helper component proteinase activity residues include Cys641 and His714.

The protein belongs to the potyviridae P3N-PIPO polyprotein family. In terms of assembly, interacts (via PIPO domain) with host PCaP1 protein; this interaction may help to anchor the movement complex to the plasma membrane from which the complex could move to the plasmodesmata. Post-translationally, potyviral RNA is expressed as two polyproteins which undergo post-translational proteolytic processing. Genome polyprotein is processed by NIa-pro, P1 and HC-pro proteinases resulting in the production of at least ten individual proteins. P3N-PIPO is cleaved by P1 and HC-pro proteinases resulting in the production of three individual proteins. The P1 proteinase and the HC-pro cleave only their respective C-termini autocatalytically.

The protein resides in the host cell junction. The protein localises to the host plasmodesma. It catalyses the reaction Hydrolyzes a Gly-|-Gly bond at its own C-terminus, commonly in the sequence -Tyr-Xaa-Val-Gly-|-Gly, in the processing of the potyviral polyprotein.. Its function is as follows. Required for aphid transmission and also has proteolytic activity. Only cleaves a Gly-Gly dipeptide at its own C-terminus. Interacts with virions and aphid stylets. Acts as a suppressor of RNA-mediated gene silencing, also known as post-transcriptional gene silencing (PTGS), a mechanism of plant viral defense that limits the accumulation of viral RNAs. May have RNA-binding activity. Allows efficient cell to cell propagation, by bypassing the host cell wall barrier. Transports viral genome to neighboring plant cells directly through plasmosdesmata, without any budding. The chain is P3N-PIPO polyprotein from Solanum betaceum (Tamarillo).